The sequence spans 120 residues: NAD(P)H-quinone oxidoreductase subunit 3, chloroplastic (120 aa).

The next 3 helical transmembrane spans lie at 9 to 29 (IFWAFLMISSVIPILAFIISG), 64 to 84 (MFALVFVVFDVETVFLYPWAV), and 88 to 108 (VLGVSVFIEALIFVLIPVVGS).

This sequence belongs to the complex I subunit 3 family. As to quaternary structure, NDH is composed of at least 16 different subunits, 5 of which are encoded in the nucleus.

The protein resides in the plastid. Its subcellular location is the chloroplast thylakoid membrane. It catalyses the reaction a plastoquinone + NADH + (n+1) H(+)(in) = a plastoquinol + NAD(+) + n H(+)(out). The enzyme catalyses a plastoquinone + NADPH + (n+1) H(+)(in) = a plastoquinol + NADP(+) + n H(+)(out). NDH shuttles electrons from NAD(P)H:plastoquinone, via FMN and iron-sulfur (Fe-S) centers, to quinones in the photosynthetic chain and possibly in a chloroplast respiratory chain. The immediate electron acceptor for the enzyme in this species is believed to be plastoquinone. Couples the redox reaction to proton translocation, and thus conserves the redox energy in a proton gradient. The polypeptide is NAD(P)H-quinone oxidoreductase subunit 3, chloroplastic (Nuphar advena (Common spatterdock)).